A 117-amino-acid chain; its full sequence is UPF0102 protein YE3728 (117 aa).

This sequence belongs to the UPF0102 family.

This is UPF0102 protein YE3728 from Yersinia enterocolitica serotype O:8 / biotype 1B (strain NCTC 13174 / 8081).